The primary structure comprises 358 residues: DnaJ homolog subfamily B member 11 (358 aa).

A signal peptide spans 1–22 (MAPQNLSTFCLLLLYLIGAVIA). The 66-residue stretch at 25–90 (DFYKILGVPR…EKRKQYDTYG (66 aa)) folds into the J domain. A Phosphothreonine modification is found at Thr188. A glycan (N-linked (GlcNAc...) asparagine) is linked at Asn261.

Part of a large chaperone multiprotein complex comprising DNAJB11, HSP90B1, HSPA5, HYOU, PDIA2, PDIA4, PDIA6, PPIB, SDF2L1, UGGT1 and very small amounts of ERP29, but not, or at very low levels, CALR nor CANX. Binds to denatured substrates in an ATP-independent manner. Interacts via the J domain with HSPA5 in an ATP-dependent manner. Post-translationally, contains high-mannose Endo H-sensitive carbohydrates. In terms of processing, cys-169, Cys-171, Cys-193 and Cys-196 form intramolecular disulfide bonds. The preferential partner for each Cys is not known.

It is found in the endoplasmic reticulum lumen. As a co-chaperone for HSPA5 it is required for proper folding, trafficking or degradation of proteins. Binds directly to both unfolded proteins that are substrates for ERAD and nascent unfolded peptide chains, but dissociates from the HSPA5-unfolded protein complex before folding is completed. May help recruiting HSPA5 and other chaperones to the substrate. Stimulates HSPA5 ATPase activity. It is necessary for maturation and correct trafficking of PKD1. This chain is DnaJ homolog subfamily B member 11 (Dnajb11), found in Rattus norvegicus (Rat).